The sequence spans 272 residues: tRNA pseudouridine synthase B (272 aa).

Asp-38 functions as the Nucleophile in the catalytic mechanism.

The protein belongs to the pseudouridine synthase TruB family. Type 1 subfamily.

It carries out the reaction uridine(55) in tRNA = pseudouridine(55) in tRNA. In terms of biological role, responsible for synthesis of pseudouridine from uracil-55 in the psi GC loop of transfer RNAs. The chain is tRNA pseudouridine synthase B from Campylobacter jejuni subsp. jejuni serotype O:2 (strain ATCC 700819 / NCTC 11168).